The chain runs to 92 residues: MSTISRDSCPALRAGVRLQHDRARDQWVLLAPERVVELDDIALVVAQRYDGTQSLAQIAQTLAAEFDADASEIETDVIELTTTLHQKRLLRL.

It belongs to the PqqD family. Monomer. Interacts with PqqE.

The protein operates within cofactor biosynthesis; pyrroloquinoline quinone biosynthesis. Functionally, functions as a PqqA binding protein and presents PqqA to PqqE, in the pyrroloquinoline quinone (PQQ) biosynthetic pathway. This is PqqA binding protein from Xanthomonas campestris pv. campestris (strain 8004).